A 297-amino-acid chain; its full sequence is Nucleotide-binding protein BMA10229_A1510 (297 aa).

8–15 (GISGSGKS) is a binding site for ATP. 57–60 (DARS) is a binding site for GTP.

Belongs to the RapZ-like family.

Functionally, displays ATPase and GTPase activities. This is Nucleotide-binding protein BMA10229_A1510 from Burkholderia mallei (strain NCTC 10229).